A 341-amino-acid polypeptide reads, in one-letter code: KH domain-containing RNA-binding protein QKI (341 aa).

The interval 11 to 82 (PKPTPDYLMQ…PDAVGPIVQL (72 aa)) is qua1 domain; involved in homodimerization. The KH domain maps to 87–153 (YVPVKEYPDF…WEHLNEDLHV (67 aa)). The qua2 domain; involved in RNA binding stretch occupies residues 182–213 (AAEGEDSLKKMQLMELAILNGTYRDANIKSPA). S188 carries the post-translational modification Phosphoserine. Omega-N-methylarginine is present on R227. R242 is subject to Asymmetric dimethylarginine; by CARM1; alternate. R242 is modified (omega-N-methylarginine; alternate). Residue R256 is modified to Omega-N-methylarginine. The SH3-binding motif lies at 276–279 (PPGP). The Nuclear localization signal signature appears at 324 to 330 (RVHPYQR).

The protein belongs to the quaking family. As to quaternary structure, homodimer; does not require RNA to homodimerize. Able to heterodimerize with BICC1. In terms of processing, methylated by PRMT1. Tyrosine phosphorylated at its C-terminus, probably by FYN. Phosphorylation leads to decreased mRNA-binding affinity, affecting transport and/or stabilization of MBP mRNA. Post-translationally, ubiquitinated by RNF6 in macrophages, leading to its degradation.

It is found in the nucleus. The protein resides in the cytoplasm. In terms of biological role, RNA reader protein, which recognizes and binds specific RNAs, thereby regulating RNA metabolic processes, such as pre-mRNA splicing, circular RNA (circRNA) formation, mRNA export, mRNA stability and/or translation. Involved in various cellular processes, such as mRNA storage into stress granules, apoptosis, lipid deposition, interferon response, glial cell fate and development. Binds to the 5'-NACUAAY-N(1,20)-UAAY-3' RNA core sequence. Acts as a mRNA modification reader that specifically recognizes and binds mRNA transcripts modified by internal N(7)-methylguanine (m7G). Promotes the formation of circular RNAs (circRNAs) during the epithelial to mesenchymal transition and in cardiomyocytes: acts by binding to sites flanking circRNA-forming exons. CircRNAs are produced by back-splicing circularization of pre-mRNAs. Plays a central role in myelinization via 3 distinct mechanisms. First, acts by protecting and promoting stability of target mRNAs such as MBP, SIRT2 and CDKN1B, which promotes oligodendrocyte differentiation. Second, participates in mRNA transport by regulating the nuclear export of MBP mRNA. Finally, indirectly regulates mRNA splicing of MAG pre-mRNA during oligodendrocyte differentiation by acting as a negative regulator of MAG exon 12 alternative splicing: acts by binding to HNRNPA1 mRNA splicing factor, preventing its translation. Involved in microglia differentiation and remyelination by regulating microexon alternative splicing of the Rho GTPase pathway. Involved in macrophage differentiation: promotes monocyte differentiation by regulating pre-mRNA splicing in naive peripheral blood monocytes. Acts as an important regulator of muscle development: required for the contractile function of cardiomyocytes by regulating alternative splicing of cardiomyocyte transcripts. Acts as a negative regulator of thermogenesis by decreasing stability, nuclear export and translation of mRNAs encoding PPARGC1A and UCP1. Also required for visceral endoderm function and blood vessel development. May also play a role in smooth muscle development. In addition to its RNA-binding activity, also acts as a nuclear transcription coactivator for SREBF2/SREBP2. The protein is KH domain-containing RNA-binding protein QKI of Bos taurus (Bovine).